A 483-amino-acid chain; its full sequence is ATP synthase subunit beta (483 aa).

Residue 169–176 (GGAGVGKT) participates in ATP binding.

Belongs to the ATPase alpha/beta chains family. As to quaternary structure, F-type ATPases have 2 components, CF(1) - the catalytic core - and CF(0) - the membrane proton channel. CF(1) has five subunits: alpha(3), beta(3), gamma(1), delta(1), epsilon(1). CF(0) has three main subunits: a(1), b(2) and c(9-12). The alpha and beta chains form an alternating ring which encloses part of the gamma chain. CF(1) is attached to CF(0) by a central stalk formed by the gamma and epsilon chains, while a peripheral stalk is formed by the delta and b chains.

It localises to the cell membrane. The enzyme catalyses ATP + H2O + 4 H(+)(in) = ADP + phosphate + 5 H(+)(out). Its function is as follows. Produces ATP from ADP in the presence of a proton gradient across the membrane. The catalytic sites are hosted primarily by the beta subunits. This chain is ATP synthase subunit beta, found in Corynebacterium glutamicum (strain ATCC 13032 / DSM 20300 / JCM 1318 / BCRC 11384 / CCUG 27702 / LMG 3730 / NBRC 12168 / NCIMB 10025 / NRRL B-2784 / 534).